A 369-amino-acid chain; its full sequence is 4-hydroxy-3-methylbut-2-en-1-yl diphosphate synthase (flavodoxin) (369 aa).

Cysteine 270, cysteine 273, cysteine 305, and glutamate 312 together coordinate [4Fe-4S] cluster.

The protein belongs to the IspG family. [4Fe-4S] cluster serves as cofactor.

It carries out the reaction (2E)-4-hydroxy-3-methylbut-2-enyl diphosphate + oxidized [flavodoxin] + H2O + 2 H(+) = 2-C-methyl-D-erythritol 2,4-cyclic diphosphate + reduced [flavodoxin]. It functions in the pathway isoprenoid biosynthesis; isopentenyl diphosphate biosynthesis via DXP pathway; isopentenyl diphosphate from 1-deoxy-D-xylulose 5-phosphate: step 5/6. Converts 2C-methyl-D-erythritol 2,4-cyclodiphosphate (ME-2,4cPP) into 1-hydroxy-2-methyl-2-(E)-butenyl 4-diphosphate. In Pseudomonas fluorescens (strain SBW25), this protein is 4-hydroxy-3-methylbut-2-en-1-yl diphosphate synthase (flavodoxin).